Here is a 75-residue protein sequence, read N- to C-terminus: UPF0729 protein C18orf32 homolog (75 aa).

The necessary for its localzation to the endoplasmic reticulum and lipid droplets stretch occupies residues 1–37 (MVCIPCIVIPVLLWVYKRFLEPVLYPIISPIISRFWR). Over residues 43–65 (DTPQQKTSTAECNGAANGSTANG) the composition is skewed to polar residues. Residues 43-75 (DTPQQKTSTAECNGAANGSTANGPKTVADKKAD) form a disordered region.

The protein belongs to the UPF0729 family.

It is found in the endoplasmic reticulum. It localises to the lipid droplet. The chain is UPF0729 protein C18orf32 homolog from Danio rerio (Zebrafish).